The following is a 230-amino-acid chain: Aspartate and serine-rich protein (230 aa).

Asn-17, Asn-132, and Asn-139 each carry an N-linked (GlcNAc...) asparagine glycan. The disordered stretch occupies residues 112 to 230 (LNGGATAGGV…DSDSNDTDSD (119 aa)). Residues 126-140 (DTDESSNDTDEDSND) show a composition bias toward acidic residues. Over residues 141–161 (SDSKDTDSDSKDTDSDSKDSD) the composition is skewed to basic and acidic residues. Residues Asn-163 and Asn-170 are each glycosylated (N-linked (GlcNAc...) asparagine). Residues 173 to 223 (DSKDTDSDSKDSDSKDTDSDSKDTDSDSKDSDSKDTDSDSKDTDSDSKDSD) show a composition bias toward basic and acidic residues. Asn-225 carries N-linked (GlcNAc...) asparagine glycosylation.

As to expression, component of the acid-insoluble organic matrix of calcified layers of the shell (at protein level).

It localises to the secreted. The polypeptide is Aspartate and serine-rich protein (Lottia gigantea (Giant owl limpet)).